The primary structure comprises 240 residues: Poxin (240 aa).

His46 functions as the Proton donor in the catalytic mechanism. The active-site Shared with catalytic histidine of dimeric partner is Tyr181. Lys185 acts as the Proton acceptor; shared with catalytic histidine of dimeric partner in catalysis.

It belongs to the poxin family. As to quaternary structure, homodimer.

The enzyme catalyses 2',3'-cGAMP + H2O = Gp(2'-5')Ap(3') + H(+). Nuclease that cleaves host 2',3'-cGAMP. The chain is Poxin (P26) from Lepidoptera (butterflies and moths).